The chain runs to 215 residues: Pyrophosphate-energized proton pump 2 (215 aa).

A run of 5 helical transmembrane segments spans residues 16-36 (VYPLAICGACILTSIAGTFFV), 51-71 (GLIATGVFSVAGLAVATYATV), 86-106 (GTNLFFCGLVGLVVTALIVVI), 136-156 (GLAVSLESTALPAIVIVGGII), and 164-184 (LFGTGIAVTAMLGLAGMIVAL).

This sequence belongs to the H(+)-translocating pyrophosphatase (TC 3.A.10) family. Homodimer. It depends on Mg(2+) as a cofactor.

Its subcellular location is the cell inner membrane. It catalyses the reaction diphosphate + H2O + H(+)(in) = 2 phosphate + 2 H(+)(out). Its function is as follows. Proton pump that utilizes the energy of pyrophosphate hydrolysis as the driving force for proton movement across the membrane. Generates a proton motive force. The sequence is that of Pyrophosphate-energized proton pump 2 (hppA2) from Rhizobium leguminosarum bv. trifolii.